The sequence spans 601 residues: Putative pentatricopeptide repeat-containing protein At3g25060, mitochondrial (601 aa).

Residues 1–80 (MVQTKHFCML…KVFDELPQRG (80 aa)) constitute a mitochondrion transit peptide. PPR repeat units lie at residues 49–79 (GSSISRDLIASCGRIGEISYARKVFDELPQR), 80–114 (GVSVYNSMIVVYSRGKNPDEVLRLYDQMIAEKIQP), 115–149 (DSSTFTMTIKACLSGLVLEKGEAVWCKAVDFGYKN), 150–180 (DVFVCSSVLNLYMKCGKMDEAEVLFGKMAKR), 181–215 (DVICWTTMVTGFAQAGKSLKAVEFYREMQNEGFGR), 216–250 (DRVVMLGLLQASGDLGDTKMGRSVHGYLYRTGLPM), 251–281 (NVVVETSLVDMYAKVGFIEVASRVFSRMMFK), 282–316 (TAVSWGSLISGFAQNGLANKAFEAVVEMQSLGFQP), 317–347 (DLVTLVGVLVACSQVGSLKTGRLVHCYILKR), 351–381 (DRVTATALMDMYSKCGALSSSREIFEHVGRK), 382–416 (DLVCWNTMISCYGIHGNGQEVVSLFLKMTESNIEP), 417–452 (DHATFASLLSALSHSGLVEQGQHWFSVMINKYKIQP), and 453–487 (SEKHYVCLIDLLARAGRVEEALDMINSEKLDNALP). The interval 488–563 (IWVALLSGCI…VPGYSAIEVN (76 aa)) is type E motif. Positions 564–594 (GELRTFLMEDLSHHEHYHMLQVLRNLKTEIR) are type E(+) motif.

The protein belongs to the PPR family. PCMP-E subfamily.

The protein resides in the mitochondrion. This chain is Putative pentatricopeptide repeat-containing protein At3g25060, mitochondrial (PCMP-E96), found in Arabidopsis thaliana (Mouse-ear cress).